We begin with the raw amino-acid sequence, 129 residues long: Histone H2A-IV (129 aa).

The protein belongs to the histone H2A family. The nucleosome is a histone octamer containing two molecules each of H2A, H2B, H3 and H4 assembled in one H3-H4 heterotetramer and two H2A-H2B heterodimers. The octamer wraps approximately 147 bp of DNA.

It is found in the nucleus. The protein localises to the chromosome. Core component of nucleosome. Nucleosomes wrap and compact DNA into chromatin, limiting DNA accessibility to the cellular machineries which require DNA as a template. Histones thereby play a central role in transcription regulation, DNA repair, DNA replication and chromosomal stability. DNA accessibility is regulated via a complex set of post-translational modifications of histones, also called histone code, and nucleosome remodeling. This is Histone H2A-IV from Volvox carteri (Green alga).